The primary structure comprises 237 residues: V-type proton ATPase subunit E (237 aa).

It belongs to the V-ATPase E subunit family. V-ATPase is a heteromultimeric enzyme composed of a peripheral catalytic V1 complex (components A to H) attached to an integral membrane V0 proton pore complex (components: a, c, c', c'' and d).

Its function is as follows. Subunit of the peripheral V1 complex of vacuolar ATPase essential for assembly or catalytic function. V-ATPase is responsible for acidifying a variety of intracellular compartments in eukaryotic cells. This is V-type proton ATPase subunit E (VATE) from Gossypium hirsutum (Upland cotton).